The primary structure comprises 427 residues: MHHNSQSLSSGHIRSPEDENVAPIGNLKHRTGSLSHISSAHPRVALSDVTNIVATNSSNNSISKPKVAPIKERLDSAAIIEEERLDANSVAQRKEADHNDLLTDREQEEPVEDDGESEEDEEEDQEPLLLQHYASDTLVWEHAFRTYYRTTLDPNDDDVYDVVMVAELSNEIFEYMRKLEDLYKPNPYYMDKQPELRWSFRSTLIDWIVQVHEKFQLLPETLYLCINIIDRYLCKEVVPVNKFQLVGAASLFIAAKYEEINCPTIKDFVYMSENCYSRNDLLDAERTILNGLEFELGWPGPMSFLRRISKADDYEHDTRTLAKYLLESTIMDHRLVSAQPSWLAAGAYFLSKIILGQNQWSLAHVYYSNYTQEQILPLATIILENCRYASKRHNAIWRKYSSRRYLHSSQIVAKWIALAEHRVERSN.

The segment covering 1–12 has biased composition (polar residues); sequence MHHNSQSLSSGH. Disordered stretches follow at residues 1–29 and 89–126; these read MHHNSQSLSSGHIRSPEDENVAPIGNLKH and SVAQRKEADHNDLLTDREQEEPVEDDGESEEDEEEDQE. A compositionally biased stretch (basic and acidic residues) spans 89–105; that stretch reads SVAQRKEADHNDLLTDR. Residues 106–126 are compositionally biased toward acidic residues; it reads EQEEPVEDDGESEEDEEEDQE.

The protein belongs to the cyclin family. Cyclin AB subfamily.

In terms of biological role, essential for the control of the cell cycle at the G2/M (mitosis) transition. Interacts with the CDC2 protein kinase to form MPF. G2/M cyclins accumulate steadily during G2 and are abruptly destroyed at mitosis. This Saccharomyces cerevisiae (strain ATCC 204508 / S288c) (Baker's yeast) protein is G2/mitotic-specific cyclin-3 (CLB3).